Consider the following 169-residue polypeptide: Ribosome maturation factor RimP (169 aa).

This sequence belongs to the RimP family.

The protein localises to the cytoplasm. In terms of biological role, required for maturation of 30S ribosomal subunits. This is Ribosome maturation factor RimP from Coprothermobacter proteolyticus (strain ATCC 35245 / DSM 5265 / OCM 4 / BT).